The following is a 188-amino-acid chain: Crossover junction endodeoxyribonuclease RuvC (188 aa).

Catalysis depends on residues Asp14, Glu74, and Asp149. Positions 14, 74, and 149 each coordinate Mg(2+).

Belongs to the RuvC family. In terms of assembly, homodimer which binds Holliday junction (HJ) DNA. The HJ becomes 2-fold symmetrical on binding to RuvC with unstacked arms; it has a different conformation from HJ DNA in complex with RuvA. In the full resolvosome a probable DNA-RuvA(4)-RuvB(12)-RuvC(2) complex forms which resolves the HJ. Mg(2+) is required as a cofactor.

It is found in the cytoplasm. It carries out the reaction Endonucleolytic cleavage at a junction such as a reciprocal single-stranded crossover between two homologous DNA duplexes (Holliday junction).. Its function is as follows. The RuvA-RuvB-RuvC complex processes Holliday junction (HJ) DNA during genetic recombination and DNA repair. Endonuclease that resolves HJ intermediates. Cleaves cruciform DNA by making single-stranded nicks across the HJ at symmetrical positions within the homologous arms, yielding a 5'-phosphate and a 3'-hydroxyl group; requires a central core of homology in the junction. The consensus cleavage sequence is 5'-(A/T)TT(C/G)-3'. Cleavage occurs on the 3'-side of the TT dinucleotide at the point of strand exchange. HJ branch migration catalyzed by RuvA-RuvB allows RuvC to scan DNA until it finds its consensus sequence, where it cleaves and resolves the cruciform DNA. The chain is Crossover junction endodeoxyribonuclease RuvC from Bacteroides fragilis (strain ATCC 25285 / DSM 2151 / CCUG 4856 / JCM 11019 / LMG 10263 / NCTC 9343 / Onslow / VPI 2553 / EN-2).